The sequence spans 435 residues: D-inositol 3-phosphate glycosyltransferase (435 aa).

Residue His25 coordinates 1D-myo-inositol 3-phosphate. UDP-N-acetyl-alpha-D-glucosamine is bound by residues 31 to 32 and Gly39; that span reads QP. 1D-myo-inositol 3-phosphate-binding positions include 36–41, Lys94, Tyr127, Thr151, and Arg171; that span reads DAGGMN. Residues Arg245 and Lys250 each contribute to the UDP-N-acetyl-alpha-D-glucosamine site. Positions 320, 321, and 323 each coordinate Mg(2+). 2 residues coordinate UDP-N-acetyl-alpha-D-glucosamine: Glu333 and Glu341. Thr347 provides a ligand contact to Mg(2+).

The protein belongs to the glycosyltransferase group 1 family. MshA subfamily. As to quaternary structure, homodimer.

The catalysed reaction is 1D-myo-inositol 3-phosphate + UDP-N-acetyl-alpha-D-glucosamine = 1D-myo-inositol 2-acetamido-2-deoxy-alpha-D-glucopyranoside 3-phosphate + UDP + H(+). Functionally, catalyzes the transfer of a N-acetyl-glucosamine moiety to 1D-myo-inositol 3-phosphate to produce 1D-myo-inositol 2-acetamido-2-deoxy-glucopyranoside 3-phosphate in the mycothiol biosynthesis pathway. In Streptosporangium roseum (strain ATCC 12428 / DSM 43021 / JCM 3005 / KCTC 9067 / NCIMB 10171 / NRRL 2505 / NI 9100), this protein is D-inositol 3-phosphate glycosyltransferase.